Here is a 374-residue protein sequence, read N- to C-terminus: uncharacterized protein (374 aa).

A helical transmembrane segment spans residues alanine 27–tyrosine 49.

Its subcellular location is the membrane. This is an uncharacterized protein from Methanocaldococcus jannaschii (strain ATCC 43067 / DSM 2661 / JAL-1 / JCM 10045 / NBRC 100440) (Methanococcus jannaschii).